The primary structure comprises 558 residues: 2-isopropylmalate synthase (558 aa).

Residues 30-303 (PIWCSVDLRD…DPKLDFSNIP (274 aa)) form the Pyruvate carboxyltransferase domain. Positions 39, 242, 244, and 278 each coordinate Mg(2+). A regulatory domain region spans residues 438-558 (LNNTLCVQDF…GLVSALNRII (121 aa)).

This sequence belongs to the alpha-IPM synthase/homocitrate synthase family. LeuA type 2 subfamily. In terms of assembly, homodimer. It depends on Mg(2+) as a cofactor.

The protein localises to the cytoplasm. It catalyses the reaction 3-methyl-2-oxobutanoate + acetyl-CoA + H2O = (2S)-2-isopropylmalate + CoA + H(+). Its pathway is amino-acid biosynthesis; L-leucine biosynthesis; L-leucine from 3-methyl-2-oxobutanoate: step 1/4. Functionally, catalyzes the condensation of the acetyl group of acetyl-CoA with 3-methyl-2-oxobutanoate (2-ketoisovalerate) to form 3-carboxy-3-hydroxy-4-methylpentanoate (2-isopropylmalate). The sequence is that of 2-isopropylmalate synthase from Helicobacter hepaticus (strain ATCC 51449 / 3B1).